Here is a 235-residue protein sequence, read N- to C-terminus: Large ribosomal subunit protein uL1 (235 aa).

The protein belongs to the universal ribosomal protein uL1 family. As to quaternary structure, part of the 50S ribosomal subunit.

Functionally, binds directly to 23S rRNA. The L1 stalk is quite mobile in the ribosome, and is involved in E site tRNA release. In terms of biological role, protein L1 is also a translational repressor protein, it controls the translation of the L11 operon by binding to its mRNA. The chain is Large ribosomal subunit protein uL1 from Mycobacterium marinum (strain ATCC BAA-535 / M).